The primary structure comprises 530 residues: Structure-specific endonuclease subunit SLX1 homolog 2 (530 aa).

The GIY-YIG domain maps to 4 to 89 (RFHCVYLLTS…PTKSTRLKTQ (86 aa)). The segment at 232 to 365 (CALCSLPLRS…PSQPCPCPLC (134 aa)) adopts an SLX1-type zinc-finger fold. Disordered regions lie at residues 276-306 (ATMGQSTRNERSGEYSNKIKDDSNDGTMDAH), 410-438 (NSSLTERKSRRKAKPALGQKRNRGEYCGD), and 474-502 (LPPSGDEGYACDSSRRGVGGSKHTTRMTD). Residues 283 to 298 (RNERSGEYSNKIKDDS) are compositionally biased toward basic and acidic residues.

It belongs to the SLX1 family. As to quaternary structure, forms a heterodimer with a member of the SLX4 family. A divalent metal cation serves as cofactor.

Its subcellular location is the nucleus. Its function is as follows. Catalytic subunit of a heterodimeric structure-specific endonuclease that resolves DNA secondary structures generated during DNA repair and recombination. Has endonuclease activity towards branched DNA substrates, introducing single-strand cuts in duplex DNA close to junctions with ss-DNA. The chain is Structure-specific endonuclease subunit SLX1 homolog 2 from Trypanosoma cruzi (strain CL Brener).